Reading from the N-terminus, the 526-residue chain is Putative D-lactate dehydrogenase C713.03, mitochondrial (526 aa).

The FAD-binding PCMH-type domain maps to 93–272 (YRGKTQLALK…TKLSVICPKR (180 aa)).

The protein belongs to the FAD-binding oxidoreductase/transferase type 4 family. The cofactor is FAD.

It localises to the mitochondrion matrix. It carries out the reaction (R)-lactate + 2 Fe(III)-[cytochrome c] = 2 Fe(II)-[cytochrome c] + pyruvate + 2 H(+). The polypeptide is Putative D-lactate dehydrogenase C713.03, mitochondrial (Schizosaccharomyces pombe (strain 972 / ATCC 24843) (Fission yeast)).